The chain runs to 300 residues: Protoheme IX farnesyltransferase (300 aa).

A run of 9 helical transmembrane segments spans residues 24–44 (VTQL…PGMV), 48–68 (VLLG…AINC), 94–114 (LQIL…LYTF), 118–138 (LTMW…TLLL), 146–166 (IVIG…AVTG), 172–192 (AWIL…VLAL), 217–237 (LHIL…FISG), 239–259 (SGAV…AYAW), and 278–298 (IVYL…RPVI).

It belongs to the UbiA prenyltransferase family. Protoheme IX farnesyltransferase subfamily.

Its subcellular location is the cell inner membrane. It carries out the reaction heme b + (2E,6E)-farnesyl diphosphate + H2O = Fe(II)-heme o + diphosphate. It participates in porphyrin-containing compound metabolism; heme O biosynthesis; heme O from protoheme: step 1/1. In terms of biological role, converts heme B (protoheme IX) to heme O by substitution of the vinyl group on carbon 2 of heme B porphyrin ring with a hydroxyethyl farnesyl side group. This Burkholderia pseudomallei (strain 1106a) protein is Protoheme IX farnesyltransferase.